A 276-amino-acid polypeptide reads, in one-letter code: Rhomboid protease GlpG (276 aa).

6 helical membrane passes run Ala94–Ile114, Ala142–Gly162, Val168–Ala188, Ser193–Leu213, Leu229–Ile249, and Ala250–Tyr270. The Nucleophile role is filled by Ser201. The active site involves His254.

Belongs to the peptidase S54 family.

The protein localises to the cell inner membrane. The catalysed reaction is Cleaves type-1 transmembrane domains using a catalytic dyad composed of serine and histidine that are contributed by different transmembrane domains.. Rhomboid-type serine protease that catalyzes intramembrane proteolysis. The protein is Rhomboid protease GlpG of Pectobacterium atrosepticum (strain SCRI 1043 / ATCC BAA-672) (Erwinia carotovora subsp. atroseptica).